A 143-amino-acid polypeptide reads, in one-letter code: Pathogenesis-related protein P2 (143 aa).

A signal peptide spans 1–23; that stretch reads MERVNKLCVAFFVINMMMAVAAA. The Barwin domain maps to 24–143; the sequence is QSATNVRATY…LNVNYEFVNC (120 aa). 3 disulfide bridges follow: Cys-52/Cys-84, Cys-73/Cys-107, and Cys-87/Cys-143.

The protein localises to the secreted. Its subcellular location is the cell wall. In Solanum lycopersicum (Tomato), this protein is Pathogenesis-related protein P2.